The following is a 68-amino-acid chain: ATP synthase F(0) complex subunit 8 (68 aa).

Residues 8 to 24 (TWSITIVSMIITLFIMF) traverse the membrane as a helical segment. At Lys-54 the chain carries N6-acetyllysine; alternate. Lys-54 carries the post-translational modification N6-succinyllysine; alternate. N6-acetyllysine is present on Lys-57.

It belongs to the ATPase protein 8 family. Component of the ATP synthase complex composed at least of ATP5F1A/subunit alpha, ATP5F1B/subunit beta, ATP5MC1/subunit c (homooctomer), MT-ATP6/subunit a, MT-ATP8/subunit 8, ATP5ME/subunit e, ATP5MF/subunit f, ATP5MG/subunit g, ATP5MK/subunit k, ATP5MJ/subunit j, ATP5F1C/subunit gamma, ATP5F1D/subunit delta, ATP5F1E/subunit epsilon, ATP5PF/subunit F6, ATP5PB/subunit b, ATP5PD/subunit d, ATP5PO/subunit OSCP. ATP synthase complex consists of a soluble F(1) head domain (subunits alpha(3) and beta(3)) - the catalytic core - and a membrane F(0) domain - the membrane proton channel (subunits c, a, 8, e, f, g, k and j). These two domains are linked by a central stalk (subunits gamma, delta, and epsilon) rotating inside the F1 region and a stationary peripheral stalk (subunits F6, b, d, and OSCP). Interacts with PRICKLE3.

Its subcellular location is the mitochondrion membrane. In terms of biological role, subunit 8, of the mitochondrial membrane ATP synthase complex (F(1)F(0) ATP synthase or Complex V) that produces ATP from ADP in the presence of a proton gradient across the membrane which is generated by electron transport complexes of the respiratory chain. ATP synthase complex consist of a soluble F(1) head domain - the catalytic core - and a membrane F(1) domain - the membrane proton channel. These two domains are linked by a central stalk rotating inside the F(1) region and a stationary peripheral stalk. During catalysis, ATP synthesis in the catalytic domain of F(1) is coupled via a rotary mechanism of the central stalk subunits to proton translocation. In vivo, can only synthesize ATP although its ATP hydrolase activity can be activated artificially in vitro. Part of the complex F(0) domain. The protein is ATP synthase F(0) complex subunit 8 of Ceratotherium simum (White rhinoceros).